A 1122-amino-acid chain; its full sequence is MSDMVERTLTALPGLFLQNQLGGPAASRAPFFSRLGGLIRGVTALSSKHEEEKLIQQELSSLKATVSAPTTTLKTMKECMVRLIYCEMLGYDASFGYIHAIKLAQQGNLLEKRVGYLAVSLFLHESHELLLLLVNTVVKDLQSTNLVEVCMALTVVSQIFPREMIPAVLPLIEDKLQHSKEIIRRKAVLALYKFYLIAPNQVQHIHTKFRKALCDRDVGVMAASLHIYLRMIKENASGYKDLTESFVTILKQVVGGKLPVEFSYHSVPAPWLQIQLLRILGLLGKDDERTSELMYDVLDESLRRAELNHNVTYAILFECVHTIYSIYPKSELLEKAAKCIGKFVLSPKINLKYLGLKALTYVIQQDPSLALQHQITIIECLDHPDPIIKRETLELLYRITNAQNVVVIVQKMLEYLHQSKEEHIIISLVGRIAELAEKYAPDNVWFIQTMNAVFSVGGDVMHPDILSNFLRLLAEGFDDETEDQQLRLYAVQSYLTLLDMENTFYPQRFLQVMSWVLGEYSYLLDKESPEEVITRLYKLLMSDSISSETKAWLFAAVTKLTPQAHSSPLVEKLIQEFTVSLNTCLRQHAFELKHLHENTELMKSLLQGAQNCEDIVADASLSFLDGFVAEGLSQGAAPYKPHHQRQEEQLSQEKVLNFEPYGLSFSSSGFTGRQSPAGISLGSDISGNSAETGLKETSSLKMEGIKKLWGKEGYLPKKESGTGDKPEASHVPAEGATVENVDQATTRKDQAQGHIPSTEEKEKQLLASSLFVGLGPENTVDLLGKADVVSHKFRRKSKLKVAQSDKTPSAPTAPCSALSLGSDVAGGDEDGLSAVDRGDGELSSELFRSESLSGPPSAEKLESVSLPVPSLFADNNMEVFNPPSSSATSTVKEETPECRHSGLVEICSNEAVSVSSYKVWRDDCLLVIWAVTSKTDSEFTDAQLEIFPVENFKIIEQPECSSPVIETERTKSFQYSVQMESPCIEGTLSGFIKYQMMDTHSVQLEFSMNLPLLDFIRPLKISTEDFGKLWLSFANDVKQTIKISEPGVALTSVLTELQQNLRLRVIDVIGNEGLLACKLLPSTPCVLHCRVHADAVALWFRSSSSVLSDYLSCHCQKVMQTS.

Ser699 carries the post-translational modification Phosphoserine. Composition is skewed to basic and acidic residues over residues 714–728 (YLPK…KPEA) and 745–760 (TTRK…STEE). Disordered stretches follow at residues 714–760 (YLPK…STEE) and 797–861 (SKLK…AEKL). Residues 726 to 1122 (PEASHVPAEG…CHCQKVMQTS (397 aa)) are interaction with TEPSIN. A compositionally biased stretch (low complexity) spans 841–853 (ELSSELFRSESLS). Phosphoserine is present on Ser851.

The protein belongs to the adaptor complexes large subunit family. In terms of assembly, adaptor protein complex 4 (AP-4) is a heterotetramer composed of two large adaptins (epsilon-type subunit AP4E1 and beta-type subunit AP4B1), a medium adaptin (mu-type subunit AP4M1) and a small adaptin (sigma-type AP4S1). Interacts with TEPSIN. Interacts with GRIA2; probably indirect it mediates the somatodendritic localization of GRIA2 in neurons.

It localises to the golgi apparatus. The protein localises to the trans-Golgi network membrane. In terms of biological role, component of the adaptor protein complex 4 (AP-4). Adaptor protein complexes are vesicle coat components involved both in vesicle formation and cargo selection. They control the vesicular transport of proteins in different trafficking pathways. AP-4 forms a non clathrin-associated coat on vesicles departing the trans-Golgi network (TGN) and may be involved in the targeting of proteins from the trans-Golgi network (TGN) to the endosomal-lysosomal system. It is also involved in protein sorting to the basolateral membrane in epithelial cells and the proper asymmetric localization of somatodendritic proteins in neurons. AP-4 is involved in the recognition and binding of tyrosine-based sorting signals found in the cytoplasmic part of cargos, but may also recognize other types of sorting signal. This chain is AP-4 complex subunit epsilon-1, found in Mus musculus (Mouse).